The following is a 787-amino-acid chain: Formate acetyltransferase (787 aa).

One can recognise a PFL domain in the interval 8 to 629 (NIFEQAWDGF…GNSPVHKGVF (622 aa)). Residue Cys-416 is the S-acetylcysteine intermediate of the active site. Cys-417 functions as the Cysteine radical intermediate in the catalytic mechanism. One can recognise a Glycine radical domain in the interval 645–774 (SPGANPSNKA…LTERVFHEVL (130 aa)). Position 749 is a glycine radical (Gly-749).

The protein belongs to the glycyl radical enzyme (GRE) family. PFL subfamily. In terms of assembly, homodimer.

It localises to the cytoplasm. The enzyme catalyses formate + acetyl-CoA = pyruvate + CoA. Its pathway is fermentation; pyruvate fermentation; formate from pyruvate: step 1/1. The protein is Formate acetyltransferase (pfl) of Lactococcus lactis subsp. cremoris (strain MG1363).